A 295-amino-acid polypeptide reads, in one-letter code: Cyclin-G1 (295 aa).

This sequence belongs to the cyclin family. Cyclin G subfamily.

It is found in the nucleus. May play a role in growth regulation. Is associated with G2/M phase arrest in response to DNA damage. May be an intermediate by which p53 mediates its role as an inhibitor of cellular proliferation. The chain is Cyclin-G1 (CCNG1) from Sus scrofa (Pig).